Consider the following 262-residue polypeptide: uncharacterized protein (262 aa).

In terms of domain architecture, BTB spans 5–107 (PLISLDVEGV…MIEHKLRTFC (103 aa)). The CRIB domain maps to 182–195 (ISLPRNFTHIAHVG).

This is an uncharacterized protein from Caenorhabditis elegans.